Here is a 415-residue protein sequence, read N- to C-terminus: MRFIFPTIAVLLEASMIVLFGFFVKYETEQNAIQQPNSTNSTKVDRSLELYPLFQDVHVMIFVGFGFLMTFLKKYGFSSVGINLLIAALGLQWGTFVQGMVHRHGQTIYIGIKNMINADFSTATVLISFGAVLGKISPTQMLIMTIIEITVFAGNEYVVGEIFQASDIGASMTIHAFGAYFGLAVAGVLYRTGLRKGHEKEESEYHSDLFAMIGTLFLWMFWPSFNSAIAETAEEQYLAIINTYLSLVACVLTAYAMSSLVGHRGKLDMVHIQNATLAGGVAVGTCADMKIHPYGSLIIGSIAGMVSVLGFRFLTPCLTAKLRIHDTCGVHNLHGLPGVVGGLSSIVAILLGVSTASSMTMQAAALGSSIGSAIAGGLITGLILRFIVRGQPSKDNFFDDSVYWEVPKEKELDNV.

At 1-2 (MR) the chain is on the cytoplasmic side. A helical membrane pass occupies residues 3–23 (FIFPTIAVLLEASMIVLFGFF). The Extracellular segment spans residues 24 to 51 (VKYETEQNAIQQPNSTNSTKVDRSLELY). Residues N37 and N40 are each glycosylated (N-linked (GlcNAc...) asparagine). Residues 52-72 (PLFQDVHVMIFVGFGFLMTFL) form a helical membrane-spanning segment. The Cytoplasmic segment spans residues 73-76 (KKYG). A helical transmembrane segment spans residues 77–97 (FSSVGINLLIAALGLQWGTFV). Residues 98–115 (QGMVHRHGQTIYIGIKNM) lie on the Extracellular side of the membrane. The helical transmembrane segment at 116-136 (INADFSTATVLISFGAVLGKI) threads the bilayer. The Cytoplasmic portion of the chain corresponds to 137-142 (SPTQML). The chain crosses the membrane as a helical span at residues 143–163 (IMTIIEITVFAGNEYVVGEIF). Over 164 to 167 (QASD) the chain is Extracellular. The helical transmembrane segment at 168 to 188 (IGASMTIHAFGAYFGLAVAGV) threads the bilayer. Over 189 to 208 (LYRTGLRKGHEKEESEYHSD) the chain is Cytoplasmic. The chain crosses the membrane as a helical span at residues 209–229 (LFAMIGTLFLWMFWPSFNSAI). At 230–236 (AETAEEQ) the chain is on the extracellular side. A helical transmembrane segment spans residues 237–257 (YLAIINTYLSLVACVLTAYAM). At 258 to 268 (SSLVGHRGKLD) the chain is on the cytoplasmic side. A helical membrane pass occupies residues 269–287 (MVHIQNATLAGGVAVGTCA). Residues 288 to 290 (DMK) lie on the Extracellular side of the membrane. Residues 291-311 (IHPYGSLIIGSIAGMVSVLGF) form a helical membrane-spanning segment. Over 312-332 (RFLTPCLTAKLRIHDTCGVHN) the chain is Cytoplasmic. Residues 333–353 (LHGLPGVVGGLSSIVAILLGV) traverse the membrane as a helical segment. Over 354 to 363 (STASSMTMQA) the chain is Extracellular. Residues 364–384 (AALGSSIGSAIAGGLITGLIL) form a helical membrane-spanning segment. The Cytoplasmic segment spans residues 385–415 (RFIVRGQPSKDNFFDDSVYWEVPKEKELDNV).

This sequence belongs to the ammonium transporter (TC 2.A.49) family. Rh subfamily. Homodimer. Heterotrimer; a RHCE monomer interacts with a RHAG homodimer. Component of the ankyrin-1 complex in the erythrocyte, composed of ANK1, RHCE, RHAG, SLC4A1, EPB42, GYPA, GYPB and AQP1. Interacts with GYPB (via the N-terminal); this interaction bridges the (RHAG)2(RHCE) heterotrimer with the SLC4A1 Band 3 I dimer complexed with GYPA. In terms of processing, glycosylated.

Its subcellular location is the membrane. It carries out the reaction methylamine(out) = methylamine(in). The catalysed reaction is NH4(+)(in) = NH4(+)(out). It catalyses the reaction CO2(out) = CO2(in). Functionally, component of the ankyrin-1 complex, a multiprotein complex involved in the stability and shape of the erythrocyte membrane. Heterotrimer with RHCE (RHAG)2(RHCE), that transports ammonium and its related derivative methylammonium, in both neutral and ionic forms, across the erythrocyte membrane. The transport of NH4(+) is electrogenic and masks the NH3 transport. Also, may act as a CO2 channel. Moreover in erythrocyte, regulates RHD membrane expression and is associated with rhesus blood group antigen expression. This Canis lupus familiaris (Dog) protein is Ammonium transporter Rh type A.